The chain runs to 214 residues: 3-isopropylmalate dehydratase small subunit (214 aa).

Belongs to the LeuD family. LeuD type 1 subfamily. As to quaternary structure, heterodimer of LeuC and LeuD.

The enzyme catalyses (2R,3S)-3-isopropylmalate = (2S)-2-isopropylmalate. Its pathway is amino-acid biosynthesis; L-leucine biosynthesis; L-leucine from 3-methyl-2-oxobutanoate: step 2/4. Catalyzes the isomerization between 2-isopropylmalate and 3-isopropylmalate, via the formation of 2-isopropylmaleate. The sequence is that of 3-isopropylmalate dehydratase small subunit from Desulforapulum autotrophicum (strain ATCC 43914 / DSM 3382 / VKM B-1955 / HRM2) (Desulfobacterium autotrophicum).